The following is a 233-amino-acid chain: Lipoprotein-releasing system ATP-binding protein LolD (233 aa).

One can recognise an ABC transporter domain in the interval 6–233 (LQCDNLCKRY…TAELSLMGAE (228 aa)). 42–49 (GSSGSGKS) is a binding site for ATP.

It belongs to the ABC transporter superfamily. Lipoprotein translocase (TC 3.A.1.125) family. The complex is composed of two ATP-binding proteins (LolD) and two transmembrane proteins (LolC and LolE).

The protein resides in the cell inner membrane. Its function is as follows. Part of the ABC transporter complex LolCDE involved in the translocation of mature outer membrane-directed lipoproteins, from the inner membrane to the periplasmic chaperone, LolA. Responsible for the formation of the LolA-lipoprotein complex in an ATP-dependent manner. This is Lipoprotein-releasing system ATP-binding protein LolD from Shigella boydii serotype 4 (strain Sb227).